An 88-amino-acid polypeptide reads, in one-letter code: Small ribosomal subunit protein bS20 (88 aa).

A disordered region spans residues 1–26; that stretch reads MANTAQARKRARQNTKRRQNSASQRS. The segment covering 7 to 19 has biased composition (basic residues); it reads ARKRARQNTKRRQ.

Belongs to the bacterial ribosomal protein bS20 family.

Its function is as follows. Binds directly to 16S ribosomal RNA. In Psychrobacter cryohalolentis (strain ATCC BAA-1226 / DSM 17306 / VKM B-2378 / K5), this protein is Small ribosomal subunit protein bS20.